The following is a 315-amino-acid chain: GTP cyclohydrolase MptA (315 aa).

Belongs to the GTP cyclohydrolase IV family. As to quaternary structure, homodimer. Fe(2+) is required as a cofactor.

It catalyses the reaction GTP + H2O = 7,8-dihydroneopterin 2',3'-cyclic phosphate + formate + diphosphate + H(+). It participates in cofactor biosynthesis; 5,6,7,8-tetrahydromethanopterin biosynthesis. Its function is as follows. Converts GTP to 7,8-dihydro-D-neopterin 2',3'-cyclic phosphate, the first intermediate in the biosynthesis of coenzyme methanopterin. This Methanococcus maripaludis (strain C5 / ATCC BAA-1333) protein is GTP cyclohydrolase MptA.